The chain runs to 360 residues: Probable neutral protease 2 homolog A (360 aa).

Positions 1–17 (MQFTALLAALGAPLALA) are cleaved as a signal peptide. The propeptide occupies 18-183 (ASIPAAAHNH…DDSTGVIDKR (166 aa)). 3 disulfide bridges follow: Cys191-Cys262, Cys269-Cys287, and Cys300-Cys360. A glycan (N-linked (GlcNAc...) asparagine) is linked at Asn205. Zn(2+) is bound at residue His311. The active site involves Glu312. Zn(2+) is bound by residues His315 and Asp326.

Belongs to the peptidase M35 family. The cofactor is Zn(2+).

The protein resides in the secreted. The enzyme catalyses Preferential cleavage of bonds with hydrophobic residues in P1'. Also 3-Asn-|-Gln-4 and 8-Gly-|-Ser-9 bonds in insulin B chain.. Functionally, probable secreted metalloprotease that shows high activities on basic nuclear substrates such as histone and protamine. May be involved in virulence. The chain is Probable neutral protease 2 homolog A (NpII-A) from Trichophyton rubrum (Athlete's foot fungus).